A 178-amino-acid polypeptide reads, in one-letter code: Interleukin-10 (178 aa).

A signal peptide spans 1-18; that stretch reads MPSSALLYCLILLAGVRP. Intrachain disulfides connect cysteine 30-cysteine 126 and cysteine 80-cysteine 132. Asparagine 134 carries an N-linked (GlcNAc...) asparagine glycan.

The protein belongs to the IL-10 family. In terms of assembly, homodimer. Interacts with IL10RA and IL10RB.

Its subcellular location is the secreted. In terms of biological role, major immune regulatory cytokine that acts on many cells of the immune system where it has profound anti-inflammatory functions, limiting excessive tissue disruption caused by inflammation. Mechanistically, IL10 binds to its heterotetrameric receptor comprising IL10RA and IL10RB leading to JAK1 and STAT2-mediated phosphorylation of STAT3. In turn, STAT3 translocates to the nucleus where it drives expression of anti-inflammatory mediators. Targets antigen-presenting cells (APCs) such as macrophages and monocytes and inhibits their release of pro-inflammatory cytokines including granulocyte-macrophage colony-stimulating factor /GM-CSF, granulocyte colony-stimulating factor/G-CSF, IL-1 alpha, IL-1 beta, IL-6, IL-8 and TNF-alpha. Also interferes with antigen presentation by reducing the expression of MHC-class II and co-stimulatory molecules, thereby inhibiting their ability to induce T cell activation. In addition, controls the inflammatory response of macrophages by reprogramming essential metabolic pathways including mTOR signaling. The chain is Interleukin-10 (IL10) from Meriones unguiculatus (Mongolian jird).